A 273-amino-acid chain; its full sequence is Putative pyruvate, phosphate dikinase regulatory protein (273 aa).

Residue 153–160 (GVSRTSKS) participates in ADP binding.

The protein belongs to the pyruvate, phosphate/water dikinase regulatory protein family. PDRP subfamily.

It catalyses the reaction N(tele)-phospho-L-histidyl/L-threonyl-[pyruvate, phosphate dikinase] + ADP = N(tele)-phospho-L-histidyl/O-phospho-L-threonyl-[pyruvate, phosphate dikinase] + AMP + H(+). The enzyme catalyses N(tele)-phospho-L-histidyl/O-phospho-L-threonyl-[pyruvate, phosphate dikinase] + phosphate + H(+) = N(tele)-phospho-L-histidyl/L-threonyl-[pyruvate, phosphate dikinase] + diphosphate. In terms of biological role, bifunctional serine/threonine kinase and phosphorylase involved in the regulation of the pyruvate, phosphate dikinase (PPDK) by catalyzing its phosphorylation/dephosphorylation. In Ehrlichia chaffeensis (strain ATCC CRL-10679 / Arkansas), this protein is Putative pyruvate, phosphate dikinase regulatory protein.